Consider the following 376-residue polypeptide: Phosphoserine aminotransferase (376 aa).

Residue R46 participates in L-glutamate binding. Residues 80–81 (AT), F104, T150, D172, and Q195 contribute to the pyridoxal 5'-phosphate site. Position 196 is an N6-(pyridoxal phosphate)lysine (K196). 247–248 (NT) lines the pyridoxal 5'-phosphate pocket.

It belongs to the class-V pyridoxal-phosphate-dependent aminotransferase family. SerC subfamily. Homodimer. Pyridoxal 5'-phosphate is required as a cofactor.

Its subcellular location is the cytoplasm. The enzyme catalyses O-phospho-L-serine + 2-oxoglutarate = 3-phosphooxypyruvate + L-glutamate. It carries out the reaction 4-(phosphooxy)-L-threonine + 2-oxoglutarate = (R)-3-hydroxy-2-oxo-4-phosphooxybutanoate + L-glutamate. It participates in amino-acid biosynthesis; L-serine biosynthesis; L-serine from 3-phospho-D-glycerate: step 2/3. The protein operates within cofactor biosynthesis; pyridoxine 5'-phosphate biosynthesis; pyridoxine 5'-phosphate from D-erythrose 4-phosphate: step 3/5. In terms of biological role, catalyzes the reversible conversion of 3-phosphohydroxypyruvate to phosphoserine and of 3-hydroxy-2-oxo-4-phosphonooxybutanoate to phosphohydroxythreonine. The sequence is that of Phosphoserine aminotransferase from Corynebacterium glutamicum (strain R).